We begin with the raw amino-acid sequence, 263 residues long: Glucosamine-6-phosphate deaminase (263 aa).

Catalysis depends on aspartate 67, which acts as the Proton acceptor; for enolization step. Asparagine 136 functions as the For ring-opening step in the catalytic mechanism. Histidine 138 acts as the Proton acceptor; for ring-opening step in catalysis. Glutamate 143 functions as the For ring-opening step in the catalytic mechanism.

Belongs to the glucosamine/galactosamine-6-phosphate isomerase family. NagB subfamily. Homohexamer.

It catalyses the reaction alpha-D-glucosamine 6-phosphate + H2O = beta-D-fructose 6-phosphate + NH4(+). Its pathway is amino-sugar metabolism; N-acetylneuraminate degradation; D-fructose 6-phosphate from N-acetylneuraminate: step 5/5. Catalyzes the reversible isomerization-deamination of glucosamine 6-phosphate (GlcN6P) to form fructose 6-phosphate (Fru6P) and ammonium ion. The sequence is that of Glucosamine-6-phosphate deaminase from Cellvibrio japonicus (strain Ueda107) (Pseudomonas fluorescens subsp. cellulosa).